Here is a 269-residue protein sequence, read N- to C-terminus: Type II restriction enzyme SfiI (269 aa).

It carries out the reaction Endonucleolytic cleavage of DNA to give specific double-stranded fragments with terminal 5'-phosphates.. Its function is as follows. An F and P subtype restriction enzyme that recognizes the double-stranded sequence 5'-GGCCN(5)GGCC-3' and cleaves before N-9. The sequence is that of Type II restriction enzyme SfiI (sfiIR) from Streptomyces fimbriatus.